The sequence spans 688 residues: Elongation factor G (688 aa).

Residues 6–280 (KLFRNFGIMA…AVVDFLPSPI (275 aa)) form the tr-type G domain. GTP contacts are provided by residues 15–22 (AHIDAGKT), 79–83 (DTPGH), and 133–136 (NKMD).

Belongs to the TRAFAC class translation factor GTPase superfamily. Classic translation factor GTPase family. EF-G/EF-2 subfamily.

The protein resides in the cytoplasm. Its function is as follows. Catalyzes the GTP-dependent ribosomal translocation step during translation elongation. During this step, the ribosome changes from the pre-translocational (PRE) to the post-translocational (POST) state as the newly formed A-site-bound peptidyl-tRNA and P-site-bound deacylated tRNA move to the P and E sites, respectively. Catalyzes the coordinated movement of the two tRNA molecules, the mRNA and conformational changes in the ribosome. In Ureaplasma parvum serovar 3 (strain ATCC 27815 / 27 / NCTC 11736), this protein is Elongation factor G.